We begin with the raw amino-acid sequence, 757 residues long: Dolichyl-diphosphooligosaccharide--protein glycosyltransferase subunit stt-3 (757 aa).

Residues 1–13 (MTSTTAARTASSR) are Cytoplasmic-facing. The chain crosses the membrane as a helical span at residues 14-34 (VGATTLLTIVVLALAWFVGFA). The Lumenal portion of the chain corresponds to 35–121 (SRLFAIVRFE…VHIREVCVFL (87 aa)). The DXD motif 1 motif lies at 49-51 (EFD). A Mn(2+)-binding site is contributed by Asp51. A helical transmembrane segment spans residues 122–140 (APTFSGLTAIATYLLTKEL). The Cytoplasmic portion of the chain corresponds to 141–142 (WS). The helical transmembrane segment at 143–160 (PGAGLFAACFIAISPGYT) threads the bilayer. The Lumenal segment spans residues 161–171 (SRSVAGSYDNE). Mn(2+)-binding residues include Asp169 and Glu171. The short motif at 169 to 171 (DNE) is the DXD motif 2 element. A helical transmembrane segment spans residues 172-191 (GIAIFALQFTYYLWVKSLKT). Residues 192–193 (GS) are Cytoplasmic-facing. A helical membrane pass occupies residues 194 to 208 (IMWASLCALSYFYMV). Topologically, residues 209-210 (SA) are lumenal. Transmembrane regions (helical) follow at residues 211–235 (WGGYVFIINLIPLHALALIIMGRYS) and 236–261 (SRLFVSYTSFYCLATILSMQVPFVGF). Residues 262–269 (QPVRTSEH) are Lumenal-facing. The chain crosses the membrane as a helical span at residues 270–289 (MPAFGVFGLLQIVALMHYAR). Residues 290-299 (NRITRQQFMT) lie on the Cytoplasmic side of the membrane. A helical transmembrane segment spans residues 300 to 320 (LFVGGLTILGALSVVVYFALV). Over 321–358 (WGGYVAPFSGRFYSLWDTGYAKIHIPIIASVSEHQPTT) the chain is Lumenal. An SVSE motif motif is present at residues 350 to 353 (SVSE). A helical transmembrane segment spans residues 359–381 (WVSFFFDLHITAAVFPVGLWYCI). Residues 382 to 387 (KKVNDE) are Cytoplasmic-facing. Residues 388 to 404 (RVFIILYAVSAVYFAGV) form a helical membrane-spanning segment. The Lumenal segment spans residues 405–408 (MVRL). Arg407 provides a ligand contact to dolichyl diphosphooligosaccharide. A helical transmembrane segment spans residues 409–430 (MLTLTPAVCVLAGIGFSYTFEK). Over 431 to 469 (YLKDEETKERSSSQSGTTKDEKLYDKAAKNVKSRNANDG) the chain is Cytoplasmic. The helical transmembrane segment at 470–495 (DESGVSSNVRTIISIILVIFLLMFVV) threads the bilayer. Residues 496–757 (HATYVTSNAY…IRPAPTASKA (262 aa)) lie on the Lumenal side of the membrane. Residues 547 to 549 (WWD) are interacts with target acceptor peptide in protein substrate. The short motif at 547–551 (WWDYG) is the WWDYG motif element. Tyr552 provides a ligand contact to dolichyl diphosphooligosaccharide. N-linked (GlcNAc...) asparagine glycosylation is found at Asn559 and Asn566. Asn570 carries an N-linked (GlcNAc...) (high mannose) asparagine glycan. An N-linked (GlcNAc...) asparagine glycan is attached at Asn584. The DK motif signature appears at 614-621 (DINKFLWM). The segment at 721–757 (RPTVKSEEATIPIKGKKATQGKNKKGVIRPAPTASKA) is disordered. Basic residues predominate over residues 734-747 (KGKKATQGKNKKGV).

It belongs to the STT3 family. As to quaternary structure, component of the oligosaccharyltransferase (OST) complex. The cofactor is Mg(2+). Mn(2+) serves as cofactor.

The protein localises to the endoplasmic reticulum membrane. It carries out the reaction a di-trans,poly-cis-dolichyl diphosphooligosaccharide + L-asparaginyl-[protein] = N(4)-(oligosaccharide-(1-&gt;4)-N-acetyl-beta-D-glucosaminyl-(1-&gt;4)-N-acetyl-beta-D-glucosaminyl)-L-asparaginyl-[protein] + a di-trans,poly-cis-dolichyl diphosphate + H(+). It participates in protein modification; protein glycosylation. Its function is as follows. Catalytic subunit of the oligosaccharyl transferase (OST) complex that catalyzes the initial transfer of a defined glycan (Glc(3)Man(9)GlcNAc(2) in eukaryotes) from the lipid carrier dolichol-pyrophosphate to an asparagine residue within an Asn-X-Ser/Thr consensus motif in nascent polypeptide chains, the first step in protein N-glycosylation. N-glycosylation occurs cotranslationally and the complex associates with the Sec61 complex at the channel-forming translocon complex that mediates protein translocation across the endoplasmic reticulum (ER). All subunits are required for a maximal enzyme activity. This subunit contains the active site and the acceptor peptide and donor lipid-linked oligosaccharide (LLO) binding pockets. In Caenorhabditis elegans, this protein is Dolichyl-diphosphooligosaccharide--protein glycosyltransferase subunit stt-3.